A 154-amino-acid polypeptide reads, in one-letter code: NADPH-dependent 7-cyano-7-deazaguanine reductase (154 aa).

The active-site Thioimide intermediate is the C54. D61 functions as the Proton donor in the catalytic mechanism. Substrate is bound by residues 76–78 (VES) and 95–96 (HE).

The protein belongs to the GTP cyclohydrolase I family. QueF type 1 subfamily.

It localises to the cytoplasm. It carries out the reaction 7-aminomethyl-7-carbaguanine + 2 NADP(+) = 7-cyano-7-deazaguanine + 2 NADPH + 3 H(+). It participates in tRNA modification; tRNA-queuosine biosynthesis. Functionally, catalyzes the NADPH-dependent reduction of 7-cyano-7-deazaguanine (preQ0) to 7-aminomethyl-7-deazaguanine (preQ1). This Porphyromonas gingivalis (strain ATCC 33277 / DSM 20709 / CIP 103683 / JCM 12257 / NCTC 11834 / 2561) protein is NADPH-dependent 7-cyano-7-deazaguanine reductase.